The following is a 186-amino-acid chain: Cytochrome b6-f complex iron-sulfur subunit (186 aa).

Residues 16–38 (LLSFVTGGAIAATTAATLYPVVL) form a helical membrane-spanning segment. Residues 74 to 163 (GEPVLTLGLD…ATVSDDKVLI (90 aa)) form the Rieske domain. Positions 109, 111, 127, and 130 each coordinate [2Fe-2S] cluster. The cysteines at positions 114 and 129 are disulfide-linked.

This sequence belongs to the Rieske iron-sulfur protein family. In terms of assembly, the 4 large subunits of the cytochrome b6-f complex are cytochrome b6, subunit IV (17 kDa polypeptide, PetD), cytochrome f and the Rieske protein, while the 4 small subunits are PetG, PetL, PetM and PetN. The complex functions as a dimer. It depends on [2Fe-2S] cluster as a cofactor.

The protein localises to the cell inner membrane. The enzyme catalyses 2 oxidized [plastocyanin] + a plastoquinol + 2 H(+)(in) = 2 reduced [plastocyanin] + a plastoquinone + 4 H(+)(out). In terms of biological role, component of the cytochrome b6-f complex, which mediates electron transfer between photosystem II (PSII) and photosystem I (PSI), cyclic electron flow around PSI, and state transitions. The polypeptide is Cytochrome b6-f complex iron-sulfur subunit (Gloeobacter violaceus (strain ATCC 29082 / PCC 7421)).